A 279-amino-acid chain; its full sequence is Ribosomal RNA small subunit methyltransferase J (279 aa).

S-adenosyl-L-methionine is bound by residues 138–139 (ER) and D194.

This sequence belongs to the methyltransferase superfamily. RsmJ family.

It localises to the cytoplasm. It carries out the reaction guanosine(1516) in 16S rRNA + S-adenosyl-L-methionine = N(2)-methylguanosine(1516) in 16S rRNA + S-adenosyl-L-homocysteine + H(+). In terms of biological role, specifically methylates the guanosine in position 1516 of 16S rRNA. In Acinetobacter baumannii (strain ACICU), this protein is Ribosomal RNA small subunit methyltransferase J.